A 94-amino-acid polypeptide reads, in one-letter code: Protein SKIP34 (94 aa).

The tract at residues 1–27 (MCYGHNQSLSSRSSLRRRSHDGEDDSV) is disordered. Positions 23-61 (EDDSVVDDLRDRLAETEARLRRARAREAELSRRLEHMKR) form a coiled coil.

Interacts with SPK1B/ASK2.

This Arabidopsis thaliana (Mouse-ear cress) protein is Protein SKIP34 (SKIP34).